A 333-amino-acid polypeptide reads, in one-letter code: uncharacterized protein (333 aa).

A signal peptide spans 1–16 (MRPFLMILSVTYIASA). The N-linked (GlcNAc...) asparagine glycan is linked to N204.

This is an uncharacterized protein from Encephalitozoon cuniculi (strain GB-M1) (Microsporidian parasite).